Here is a 180-residue protein sequence, read N- to C-terminus: Crossover junction endodeoxyribonuclease RuvC (180 aa).

Residues D13, E73, and D145 contribute to the active site. The Mg(2+) site is built by D13, E73, and D145.

This sequence belongs to the RuvC family. Homodimer which binds Holliday junction (HJ) DNA. The HJ becomes 2-fold symmetrical on binding to RuvC with unstacked arms; it has a different conformation from HJ DNA in complex with RuvA. In the full resolvosome a probable DNA-RuvA(4)-RuvB(12)-RuvC(2) complex forms which resolves the HJ. The cofactor is Mg(2+).

It is found in the cytoplasm. The catalysed reaction is Endonucleolytic cleavage at a junction such as a reciprocal single-stranded crossover between two homologous DNA duplexes (Holliday junction).. Functionally, the RuvA-RuvB-RuvC complex processes Holliday junction (HJ) DNA during genetic recombination and DNA repair. Endonuclease that resolves HJ intermediates. Cleaves cruciform DNA by making single-stranded nicks across the HJ at symmetrical positions within the homologous arms, yielding a 5'-phosphate and a 3'-hydroxyl group; requires a central core of homology in the junction. The consensus cleavage sequence is 5'-(A/T)TT(C/G)-3'. Cleavage occurs on the 3'-side of the TT dinucleotide at the point of strand exchange. HJ branch migration catalyzed by RuvA-RuvB allows RuvC to scan DNA until it finds its consensus sequence, where it cleaves and resolves the cruciform DNA. The sequence is that of Crossover junction endodeoxyribonuclease RuvC from Magnetococcus marinus (strain ATCC BAA-1437 / JCM 17883 / MC-1).